Here is an 866-residue protein sequence, read N- to C-terminus: Probable LRR receptor-like serine/threonine-protein kinase At5g16900 (866 aa).

Residues 1–20 (MEDRHRYLFFIFAIIHYVQA) form the signal peptide. Residues 21–515 (QQGFISLDCG…SSSGNKETTV (495 aa)) are Extracellular-facing. Asparagine 137, asparagine 176, asparagine 230, asparagine 251, asparagine 331, asparagine 404, asparagine 409, and asparagine 436 each carry an N-linked (GlcNAc...) asparagine glycan. LRR repeat units follow at residues 415–438 (RIIS…QNLT), 439–461 (QLQK…LANM), and 463–485 (SLLF…LLDR). Residues asparagine 468 and asparagine 505 are each glycosylated (N-linked (GlcNAc...) asparagine). A helical transmembrane segment spans residues 516–536 (IAPVAAAIAIFIAVLVLIIVF). Residues 537 to 866 (IKKRPSSIRA…LNQVIDSKSS (330 aa)) are Cytoplasmic-facing. Phosphothreonine is present on threonine 564. A Protein kinase domain is found at 573-846 (NNFERVIGEG…HVVQELKQCI (274 aa)). ATP is bound by residues 579–587 (IGEGGFGVV) and lysine 601. Tyrosine 646 is subject to Phosphotyrosine. The Proton acceptor role is filled by aspartate 698. Serine 732 carries the phosphoserine modification. A phosphothreonine mark is found at threonine 733 and threonine 738. Position 746 is a phosphotyrosine (tyrosine 746).

Belongs to the protein kinase superfamily. Ser/Thr protein kinase family.

It is found in the membrane. The catalysed reaction is L-seryl-[protein] + ATP = O-phospho-L-seryl-[protein] + ADP + H(+). It catalyses the reaction L-threonyl-[protein] + ATP = O-phospho-L-threonyl-[protein] + ADP + H(+). In Arabidopsis thaliana (Mouse-ear cress), this protein is Probable LRR receptor-like serine/threonine-protein kinase At5g16900.